The chain runs to 503 residues: UDP-N-acetylmuramate--L-alanine ligase (503 aa).

The interval 1–22 is disordered; the sequence is MIKQTHVSNSSNNSTNSTAAQV. A compositionally biased stretch (low complexity) spans 8–18; sequence SNSSNNSTNST. Position 135-141 (135-141) interacts with ATP; sequence GTHGKTT.

The protein belongs to the MurCDEF family.

Its subcellular location is the cytoplasm. It catalyses the reaction UDP-N-acetyl-alpha-D-muramate + L-alanine + ATP = UDP-N-acetyl-alpha-D-muramoyl-L-alanine + ADP + phosphate + H(+). It functions in the pathway cell wall biogenesis; peptidoglycan biosynthesis. Functionally, cell wall formation. This Colwellia psychrerythraea (strain 34H / ATCC BAA-681) (Vibrio psychroerythus) protein is UDP-N-acetylmuramate--L-alanine ligase.